Here is a 603-residue protein sequence, read N- to C-terminus: Deuterosome assembly protein 1 (603 aa).

5 coiled-coil regions span residues 14 to 59 (CEAE…NAQT), 85 to 197 (MTQN…GKKQ), 227 to 278 (IEKL…ELQS), 336 to 399 (QDQP…KQLK), and 454 to 480 (HTSI…NGKS). Phosphoserine is present on S546. Residues 557-600 (AAQHFLLEEEKRAKELEKLLNTHIDELQRHTEFTLNKYSKLKQN) are a coiled coil.

This sequence belongs to the CEP63 family. In terms of assembly, interacts with CEP152; the interaction is mutually exclusive with CEP63.

It is found in the cytoplasm. In terms of biological role, key structural component of the deuterosome, a structure that promotes de novo centriole amplification in multiciliated cells. Deuterosome-mediated centriole amplification occurs in terminally differentiated multiciliated cells and can generate more than 100 centrioles. Probably sufficient for the specification and formation of the deuterosome inner core. Interacts with CEP152 and recruits PLK4 to activate centriole biogenesis. In Macaca fascicularis (Crab-eating macaque), this protein is Deuterosome assembly protein 1.